The sequence spans 306 residues: Phospho-N-acetylmuramoyl-pentapeptide-transferase (306 aa).

Helical transmembrane passes span 2–22, 47–67, 71–91, 105–125, 131–151, 162–182, 185–205, 209–229, 236–256, and 284–304; these read IALL…LKYW, SGTP…FLFF, FFIS…DLKL, IFLS…DYKI, LIID…IAVP, GLAG…SFHF, IALE…FNSH, IFMG…LSVV, LIFL…QVFF, and IVWR…VLWY.

Belongs to the glycosyltransferase 4 family. MraY subfamily. Requires Mg(2+) as cofactor.

It localises to the cell inner membrane. It carries out the reaction UDP-N-acetyl-alpha-D-muramoyl-L-alanyl-gamma-D-glutamyl-meso-2,6-diaminopimeloyl-D-alanyl-D-alanine + di-trans,octa-cis-undecaprenyl phosphate = di-trans,octa-cis-undecaprenyl diphospho-N-acetyl-alpha-D-muramoyl-L-alanyl-D-glutamyl-meso-2,6-diaminopimeloyl-D-alanyl-D-alanine + UMP. It participates in cell wall biogenesis; peptidoglycan biosynthesis. In terms of biological role, catalyzes the initial step of the lipid cycle reactions in the biosynthesis of the cell wall peptidoglycan: transfers peptidoglycan precursor phospho-MurNAc-pentapeptide from UDP-MurNAc-pentapeptide onto the lipid carrier undecaprenyl phosphate, yielding undecaprenyl-pyrophosphoryl-MurNAc-pentapeptide, known as lipid I. This is Phospho-N-acetylmuramoyl-pentapeptide-transferase from Dictyoglomus thermophilum (strain ATCC 35947 / DSM 3960 / H-6-12).